Reading from the N-terminus, the 578-residue chain is ATP-dependent RNA helicase dbp3 (578 aa).

Positions 59 to 69 (KRSADEEASVK) are enriched in basic and acidic residues. The tract at residues 59 to 117 (KRSADEEASVKRKEKKSKHEHKKHKKDKPSADKDRISKKDKKKSKKGKSKTKEESIEIN) is disordered. Residues 70–85 (RKEKKSKHEHKKHKKD) show a composition bias toward basic residues. Over residues 86-95 (KPSADKDRIS) the composition is skewed to basic and acidic residues. Residues 96–107 (KKDKKKSKKGKS) are compositionally biased toward basic residues. The Q motif signature appears at 167–193 (LQFDELDVSAKLREGLKNYKEPTPIQA). Residues 196–373 (WPYLLAGRDV…ATFLKDPVKI (178 aa)) form the Helicase ATP-binding domain. Position 209-216 (209-216 (AETGSGKT)) interacts with ATP. A DEAD box motif is present at residues 316–319 (DEAD). The region spanning 402–550 (MLDNLLRKHL…DIPEGLFKFG (149 aa)) is the Helicase C-terminal domain.

It belongs to the DEAD box helicase family. DDX5/DBP2 subfamily.

Its subcellular location is the nucleus. The protein localises to the nucleolus. The catalysed reaction is ATP + H2O = ADP + phosphate + H(+). Functionally, ATP-dependent RNA helicase required for 60S ribosomal subunit synthesis. Involved in efficient pre-rRNA processing, predominantly at site A3, which is necessary for the normal formation of 25S and 5.8S rRNAs. This Schizosaccharomyces pombe (strain 972 / ATCC 24843) (Fission yeast) protein is ATP-dependent RNA helicase dbp3 (dbp3).